The following is a 757-amino-acid chain: Polymeric immunoglobulin receptor (757 aa).

A signal peptide spans 1–18 (MSRLFLACLLAIFPVVSM). An Ig-like V-type 1; required for binding to polymeric IgA and IgM domain is found at 19 to 126 (KSPIFGPEEV…RGLNFDVSLE (108 aa)). Over 19–632 (KSPIFGPEEV…TGYSGSSKAL (614 aa)) the chain is Extracellular. Intrachain disulfides connect cysteine 40-cysteine 110, cysteine 56-cysteine 64, cysteine 152-cysteine 220, cysteine 257-cysteine 324, cysteine 271-cysteine 279, cysteine 370-cysteine 440, and cysteine 384-cysteine 394. Asparagine 83 carries N-linked (GlcNAc...) asparagine glycosylation. 4 Ig-like V-type domains span residues 145–237 (GRTV…DLQV), 250–341 (RSSV…VQAW), 353–457 (ASPS…LKVV), and 461–560 (PSLK…VYVA). Residues asparagine 420 and asparagine 468 are each glycosylated (N-linked (GlcNAc...) asparagine). 3 cysteine pairs are disulfide-bonded: cysteine 481/cysteine 543, cysteine 485/cysteine 519, and cysteine 495/cysteine 502. The interval 607-627 (KDAAGGPGAPADPGRPTGYSG) is disordered. Residues 633-653 (VSTLVPLALVLVAGVVAIGVV) traverse the membrane as a helical segment. Over 654–757 (RARHRKNVDR…AATQNGPTEA (104 aa)) the chain is Cytoplasmic. Phosphoserine is present on residues serine 665, serine 674, serine 681, and serine 727. A compositionally biased stretch (basic and acidic residues) spans 679–688 (ENSRDFEGRD). The disordered stretch occupies residues 679–730 (ENSRDFEGRDNMGASPEAQETSLGGKDEFATTTEDTVESKEPKKAKRSSKEE).

As to quaternary structure, interacts (mainly via CDR1-like domain) with dimeric IgA. Interacts (mainly via CDR2-like domain) with pentameric IgM. In terms of assembly, either free or part of the secretory IgA (sIgA) complex that consists of two, four or five IgA monomers, and two additional non-Ig polypeptides, namely the JCHAIN and the secretory component (the proteolytic product of PIGR). Free secretory component interacts with bacterial antigens toxA of C.difficile and eae of E.coli. In the absence of dimeric IgA, Ser-727 is phosphorylated which allows PIGR to function normally. Post-translationally, N-glycosylated. N-glycosylation is required for anchoring IgA molecules to mucus, but is not necessary for Ig binding. In terms of tissue distribution, found in mammary gland, jejunum, lung, kidney and small intestine.

The protein resides in the cell membrane. It is found in the secreted. In terms of biological role, mediates selective transcytosis of polymeric IgA and IgM across mucosal epithelial cells. Binds polymeric IgA and IgM at the basolateral surface of epithelial cells. The complex is then transported across the cell to be secreted at the apical surface. During this process, a cleavage occurs that separates the extracellular (known as the secretory component) from the transmembrane segment. Its function is as follows. Through its N-linked glycans ensures anchoring of secretory IgA (sIgA) molecules to mucus lining the epithelial surface to neutralize extracellular pathogens. On its own (free form) may act as a non-specific microbial scavenger to prevent pathogen interaction with epithelial cells. This chain is Polymeric immunoglobulin receptor (PIGR), found in Bos taurus (Bovine).